The primary structure comprises 965 residues: PWWP domain-containing protein 4 (965 aa).

A PWWP domain is found at 135–196 (VGDMVWGKVK…PAELIPFEPH (62 aa)). The segment covering 437-455 (MNFTSSSGNIPGKKSSVSK) has biased composition (polar residues). Disordered stretches follow at residues 437-507 (MNFT…KSSL), 526-577 (VVKR…KSSQ), 649-708 (SAKT…SLAP), and 905-927 (LSSQ…PPLD). Basic and acidic residues-rich tracts occupy residues 456-474 (LSRD…RMGE) and 481-495 (DQEK…KQDE). Residues 496-507 (TGTNSRSNKSSL) show a composition bias toward polar residues. The Nuclear localization signal signature appears at 546–553 (KKKEYVSE). Over residues 549-563 (EYVSELNRDTPDKRK) the composition is skewed to basic and acidic residues. Over residues 657-676 (NEQSKAGRNRISSDSQQDVP) the composition is skewed to polar residues. Basic and acidic residues predominate over residues 691–702 (ASDKKTNQDATK). Polar residues predominate over residues 905 to 919 (LSSQDSEPKPVNNQV).

The protein belongs to the PDP family. Component of the PRC2 (polycomb repressive complex 2) complex which regulates histone methylation on histone H3K27.

The protein localises to the nucleus. Functionally, may influence gene expression by regulating the function of the PRC2 complex and modulating H3K27me3 level. This is PWWP domain-containing protein 4 from Arabidopsis thaliana (Mouse-ear cress).